Consider the following 101-residue polypeptide: DNA-binding protein Fis (101 aa).

The segment at residues 77 to 96 is a DNA-binding region (H-T-H motif); sequence QTRAANMLGINRGTLRKKLK.

This sequence belongs to the transcriptional regulatory Fis family. In terms of assembly, homodimer.

In terms of biological role, activates ribosomal RNA transcription. Plays a direct role in upstream activation of rRNA promoters. This chain is DNA-binding protein Fis, found in Shewanella denitrificans (strain OS217 / ATCC BAA-1090 / DSM 15013).